Here is a 171-residue protein sequence, read N- to C-terminus: Dual specificity protein phosphatase OPG106 (171 aa).

A Tyrosine-protein phosphatase domain is found at 23–171 (SPTIMTRVTN…IIEKYVIDKN (149 aa)). The active-site Phosphocysteine intermediate is the C110.

The protein belongs to the protein-tyrosine phosphatase family. Non-receptor class dual specificity subfamily. As to quaternary structure, homodimer.

The protein resides in the virion. It is found in the host cytoplasm. It catalyses the reaction O-phospho-L-tyrosyl-[protein] + H2O = L-tyrosyl-[protein] + phosphate. The enzyme catalyses O-phospho-L-seryl-[protein] + H2O = L-seryl-[protein] + phosphate. With respect to regulation, inhibited by NSC-62914, NSC-28086, NSC-105687, NSC-23173, 540211 and 217691 with IC50 values of 48, 51, 212, 342, 4 and 11 uM, respectively. Serine/tyrosine phosphatase which down-regulates cellular antiviral response by dephosphorylating activated host STAT1 and blocking interferon (IFN)-stimulated innate immune responses. Dephosphorylates the OPG144 protein. This chain is Dual specificity protein phosphatase OPG106 (OPG106), found in Homo sapiens (Human).